Consider the following 591-residue polypeptide: Aspartate--tRNA ligase (591 aa).

Position 174 (glutamate 174) interacts with L-aspartate. Residues 198–201 (QLFK) are aspartate. Residue arginine 220 coordinates L-aspartate. ATP contacts are provided by residues 220–222 (RDE) and glutamine 229. Histidine 450 contacts L-aspartate. Glutamate 486 provides a ligand contact to ATP. Arginine 493 is an L-aspartate binding site. Residue 538-541 (GLDR) participates in ATP binding.

Belongs to the class-II aminoacyl-tRNA synthetase family. Type 1 subfamily. In terms of assembly, homodimer.

The protein localises to the cytoplasm. It carries out the reaction tRNA(Asp) + L-aspartate + ATP = L-aspartyl-tRNA(Asp) + AMP + diphosphate. Its function is as follows. Catalyzes the attachment of L-aspartate to tRNA(Asp) in a two-step reaction: L-aspartate is first activated by ATP to form Asp-AMP and then transferred to the acceptor end of tRNA(Asp). The protein is Aspartate--tRNA ligase of Leuconostoc mesenteroides subsp. mesenteroides (strain ATCC 8293 / DSM 20343 / BCRC 11652 / CCM 1803 / JCM 6124 / NCDO 523 / NBRC 100496 / NCIMB 8023 / NCTC 12954 / NRRL B-1118 / 37Y).